Consider the following 488-residue polypeptide: N-succinylglutamate 5-semialdehyde dehydrogenase 2 (488 aa).

221 to 226 (GSSNTG) contacts NAD(+). Catalysis depends on residues Glu244 and Cys278.

This sequence belongs to the aldehyde dehydrogenase family. AstD subfamily.

It carries out the reaction N-succinyl-L-glutamate 5-semialdehyde + NAD(+) + H2O = N-succinyl-L-glutamate + NADH + 2 H(+). Its pathway is amino-acid degradation; L-arginine degradation via AST pathway; L-glutamate and succinate from L-arginine: step 4/5. Functionally, catalyzes the NAD-dependent reduction of succinylglutamate semialdehyde into succinylglutamate. This Pseudoalteromonas translucida (strain TAC 125) protein is N-succinylglutamate 5-semialdehyde dehydrogenase 2.